The following is an 89-amino-acid chain: Small ribosomal subunit protein uS15 (89 aa).

It belongs to the universal ribosomal protein uS15 family. As to quaternary structure, part of the 30S ribosomal subunit. Forms a bridge to the 50S subunit in the 70S ribosome, contacting the 23S rRNA.

In terms of biological role, one of the primary rRNA binding proteins, it binds directly to 16S rRNA where it helps nucleate assembly of the platform of the 30S subunit by binding and bridging several RNA helices of the 16S rRNA. Forms an intersubunit bridge (bridge B4) with the 23S rRNA of the 50S subunit in the ribosome. This chain is Small ribosomal subunit protein uS15, found in Bordetella parapertussis (strain 12822 / ATCC BAA-587 / NCTC 13253).